The chain runs to 323 residues: Zinc finger C2HC domain-containing protein 1A (323 aa).

The C2HC/C3H-type 1 zinc finger occupies 14-43; sequence ELLPCKICGRTFFPVALKKHGPICQKTATK. The Zn(2+) site is built by Cys-18, Cys-21, His-33, and Cys-37. Residues 42-81 form a disordered region; it reads TKKRKTFDSSRQRAEGTDIPTVKPLKPRPEPPKKPSNWRR. Over residues 47-57 the composition is skewed to basic and acidic residues; sequence TFDSSRQRAEG. The C2HC/C3H-type 2 zinc finger occupies 117 to 146; sequence DYIQCPYCQRRFNENAADRHINFCKEQAAR. 4 residues coordinate Zn(2+): Cys-121, Cys-124, His-136, and Cys-140. The tract at residues 149–258 is disordered; sequence NKGKFSTDTK…NPASGVLTSK (110 aa). The span at 177–197 shows a compositional bias: polar residues; it reads SPGTTSSGSSRLPQPSGTSKT. Residues 198 to 214 are compositionally biased toward low complexity; that stretch reads VVGAPSGKVSSVSSSSG. Ser-221 carries the phosphoserine modification. The residue at position 242 (Thr-242) is a Phosphothreonine. Ser-290 carries the phosphoserine modification.

It belongs to the ZC2HC1 family. Zn(2+) is required as a cofactor.

In Bos taurus (Bovine), this protein is Zinc finger C2HC domain-containing protein 1A (ZC2HC1A).